A 146-amino-acid polypeptide reads, in one-letter code: Large ribosomal subunit protein uL15 (146 aa).

A disordered region spans residues 1–51 (MKLHELQPAAGSRKVRNRVGRGTSSGNGKTSGRGQKGQKARSGGGVRLGFE). 2 stretches are compositionally biased toward gly residues: residues 23–35 (TSSG…GRGQ) and 42–51 (SGGGVRLGFE).

It belongs to the universal ribosomal protein uL15 family. In terms of assembly, part of the 50S ribosomal subunit.

Functionally, binds to the 23S rRNA. The sequence is that of Large ribosomal subunit protein uL15 from Streptococcus sanguinis (strain SK36).